A 596-amino-acid polypeptide reads, in one-letter code: Arrestin domain-containing protein C31A2.12 (596 aa).

The chain crosses the membrane as a helical span at residues 194–211 (AYAIGSYIPIHFVLVPLL). Disordered regions lie at residues 363 to 387 (NLDT…TYAS) and 405 to 446 (QQQP…VITR). Phosphothreonine is present on residues Thr-373 and Thr-374. Composition is skewed to polar residues over residues 405–420 (QQQP…SPSN) and 430–446 (SLGS…VITR). Phosphoserine is present on residues Ser-452, Ser-474, Ser-493, and Ser-497. The interval 493–596 (SRPPSPGIVT…MLPSGFSRRN (104 aa)) is disordered. Phosphothreonine is present on residues Thr-502 and Thr-507. The span at 504–522 (PQRTSPSFFVSPTESTRQS) shows a compositional bias: polar residues. A Phosphoserine modification is found at Ser-514. Residues 531-555 (HSTSSSSGISPSHSSASLAHLSQAS) show a composition bias toward low complexity.

This sequence belongs to the arrestin family.

The protein localises to the membrane. The polypeptide is Arrestin domain-containing protein C31A2.12 (Schizosaccharomyces pombe (strain 972 / ATCC 24843) (Fission yeast)).